Here is a 220-residue protein sequence, read N- to C-terminus: Probable 26S proteasome regulatory subunit p27 (220 aa).

One can recognise a PDZ domain in the interval 119 to 196 (ARRNNDDQAI…PVLLLREGQI (78 aa)).

It belongs to the proteasome subunit p27 family. In terms of assembly, part of a transient complex containing NAS2, RPT4 and RPT5 formed during the assembly of the 26S proteasome.

In terms of biological role, acts as a chaperone during the assembly of the 26S proteasome, specifically of the base subcomplex of the 19S regulatory complex (RC). During the base subcomplex assembly is part of a NAS2:RPT4:RPT5 module; NAS2 is released during the further base assembly process. This is Probable 26S proteasome regulatory subunit p27 (NAS2) from Saccharomyces cerevisiae (strain ATCC 204508 / S288c) (Baker's yeast).